The sequence spans 431 residues: Pyroglutamylated RF-amide peptide receptor (431 aa).

Residues 1–46 (MQALNITPEQFSRLLRDHNLTREQFIALYRLRPLVYTPELPGRAKL) lie on the Extracellular side of the membrane. An N-linked (GlcNAc...) asparagine glycan is attached at N19. The chain crosses the membrane as a helical span at residues 47–67 (ALVLTGVLIFALALFGNALVF). At 68–81 (YVVTRSKAMRTVTN) the chain is on the cytoplasmic side. A helical membrane pass occupies residues 82 to 102 (IFICSLALSDLLITFFCIPVT). At 103–120 (MLQNISDNWLGGAFICKM) the chain is on the extracellular side. A helical transmembrane segment spans residues 121–141 (VPFVQSTAVVTEILTMTCIAV). At 142–162 (ERHQGLVHPFKMKWQYTNRRA) the chain is on the cytoplasmic side. The chain crosses the membrane as a helical span at residues 163–183 (FTMLGVVWLVAVIVGSPMWHV). Over 184-212 (QQLEIKYDFLYEKEHICCLEEWTSPVHQK) the chain is Extracellular. The chain crosses the membrane as a helical span at residues 213 to 233 (IYTTFILVILFLLPLMVMLIL). Residues 234 to 271 (YSKIGYELWIKKRVGDGSVLRTIHGKEMSKIARKKKRA) are Cytoplasmic-facing. A helical membrane pass occupies residues 272–292 (VIMMVTVVALFAVCWAPFHVV). Residues 293 to 311 (HMMIEYSNFEKEYDDVTIK) lie on the Extracellular side of the membrane. Residues 312 to 332 (MIFAIVQIIGFSNSICNPIVY) form a helical membrane-spanning segment. Over 333–431 (AFMNENFKKN…AENSPLDSGH (99 aa)) the chain is Cytoplasmic.

Belongs to the G-protein coupled receptor 1 family. Expressed widely in the brain with high levels in the hypothalamus, trigeminal ganglia and vestibular neurons, and moderate levels in the amygdala, cortex, pituitary, hippocampus, thalamus, caudate nucleus and medulla oblongata. In peripheral tissues, expressed at high levels in the retina and at moderate levels in the heart, kidney, testis and thyroid.

Its subcellular location is the cell membrane. Its function is as follows. Receptor for the orexigenic neuropeptide QRFP. The activity of this receptor is mediated by G proteins that modulate adenylate cyclase activity and intracellular calcium levels. This chain is Pyroglutamylated RF-amide peptide receptor (QRFPR), found in Homo sapiens (Human).